Here is a 212-residue protein sequence, read N- to C-terminus: uncharacterized protein (212 aa).

Residues 1-88 form a disordered region; sequence MAEEQKIALE…PAPAKPASAS (88 aa). Position 13 is a phosphoserine (Ser13). The segment covering 23–41 has biased composition (pro residues); sequence ADTPAPAPAEIPAPAPAPT. Basic and acidic residues predominate over residues 45-54; the sequence is VTKDVAEEKI.

It belongs to the remorin family.

The protein resides in the cell membrane. This is an uncharacterized protein from Arabidopsis thaliana (Mouse-ear cress).